Here is a 543-residue protein sequence, read N- to C-terminus: Splicing factor U2af large subunit B (543 aa).

A compositionally biased stretch (gly residues) spans 1 to 10 (MADDNGGGGD). A disordered region spans residues 1–171 (MADDNGGGGD…IPTPSQLPGS (171 aa)). Basic and acidic residues-rich tracts occupy residues 17–78 (VRPE…DRDR) and 88–114 (EHRD…ERDG). The span at 115–126 (HRRHRSRSRSRS) shows a compositional bias: basic residues. RRM domains lie at 207 to 290 (RRVY…RPTD), 327 to 405 (DRIF…RANQ), and 446 to 532 (QVVT…YPEN).

The protein belongs to the splicing factor SR family.

It is found in the nucleus. Its function is as follows. Necessary for the splicing of pre-mRNA. This is Splicing factor U2af large subunit B (U2AF65B) from Triticum aestivum (Wheat).